A 103-amino-acid polypeptide reads, in one-letter code: N(4)-acetylcytidine amidohydrolase (103 aa).

One can recognise an ASCH domain in the interval 6–100 (ITFFQRFQND…NQMQFYVIDF (95 aa)). The Proton acceptor role is filled by Lys21. Thr24 serves as the catalytic Nucleophile. Glu74 functions as the Proton donor in the catalytic mechanism.

The protein belongs to the N(4)-acetylcytidine amidohydrolase family.

It catalyses the reaction N(4)-acetylcytidine + H2O = cytidine + acetate + H(+). It carries out the reaction N(4)-acetyl-2'-deoxycytidine + H2O = 2'-deoxycytidine + acetate + H(+). The enzyme catalyses N(4)-acetylcytosine + H2O = cytosine + acetate + H(+). Its function is as follows. Catalyzes the hydrolysis of N(4)-acetylcytidine (ac4C). This Salmonella arizonae (strain ATCC BAA-731 / CDC346-86 / RSK2980) protein is N(4)-acetylcytidine amidohydrolase (yqfB).